The primary structure comprises 66 residues: Large ribosomal subunit protein uL29 (66 aa).

Belongs to the universal ribosomal protein uL29 family.

The protein is Large ribosomal subunit protein uL29 of Methylibium petroleiphilum (strain ATCC BAA-1232 / LMG 22953 / PM1).